The following is a 544-amino-acid chain: Chaperonin GroEL (544 aa).

Residues 29 to 32 (TMGP), K50, 86 to 90 (DGTTT), G414, 477 to 479 (NAA), and D493 contribute to the ATP site. Positions 525 to 544 (DKPAMPSMPDMGGMGMPGMM) are disordered.

Belongs to the chaperonin (HSP60) family. Forms a cylinder of 14 subunits composed of two heptameric rings stacked back-to-back. Interacts with the co-chaperonin GroES.

Its subcellular location is the cytoplasm. It carries out the reaction ATP + H2O + a folded polypeptide = ADP + phosphate + an unfolded polypeptide.. Its function is as follows. Together with its co-chaperonin GroES, plays an essential role in assisting protein folding. The GroEL-GroES system forms a nano-cage that allows encapsulation of the non-native substrate proteins and provides a physical environment optimized to promote and accelerate protein folding. This Aliarcobacter butzleri (strain RM4018) (Arcobacter butzleri) protein is Chaperonin GroEL.